A 151-amino-acid polypeptide reads, in one-letter code: Ribonuclease H (151 aa).

Residues 1–141 (MKNVIIYTDG…ADALANRGID (141 aa)) enclose the RNase H type-1 domain. Residues Asp9, Glu47, Asp69, and Asp133 each coordinate Mg(2+).

It belongs to the RNase H family. Monomer. Mg(2+) serves as cofactor.

The protein resides in the cytoplasm. The enzyme catalyses Endonucleolytic cleavage to 5'-phosphomonoester.. Functionally, endonuclease that specifically degrades the RNA of RNA-DNA hybrids. The sequence is that of Ribonuclease H from Alcanivorax borkumensis (strain ATCC 700651 / DSM 11573 / NCIMB 13689 / SK2).